Consider the following 272-residue polypeptide: Enoyl-[acyl-carrier-protein] reductase [NADH] 1 (272 aa).

Residues Gly-17, 23 to 24 (SI), Gln-44, 68 to 69 (DV), and Ile-96 contribute to the NAD(+) site. Active-site proton acceptor residues include Tyr-149 and Tyr-159. NAD(+)-binding positions include Lys-166 and 195–199 (IKTLA).

It belongs to the short-chain dehydrogenases/reductases (SDR) family. FabI subfamily.

Its subcellular location is the cell inner membrane. It carries out the reaction a 2,3-saturated acyl-[ACP] + NAD(+) = a (2E)-enoyl-[ACP] + NADH + H(+). It functions in the pathway lipid metabolism; fatty acid biosynthesis. This is Enoyl-[acyl-carrier-protein] reductase [NADH] 1 (fabI1) from Rhizobium meliloti (strain 1021) (Ensifer meliloti).